Reading from the N-terminus, the 475-residue chain is uncharacterized protein (475 aa).

This sequence to E.coli YihN.

This is an uncharacterized protein from Mycoplasma pneumoniae (strain ATCC 29342 / M129 / Subtype 1) (Mycoplasmoides pneumoniae).